Consider the following 538-residue polypeptide: Calcium-dependent protein kinase 8 (538 aa).

Positions 1 to 26 (MGNCCGTPATAEEGGKRRRRGKQKKA) are disordered. A lipid anchor (N-myristoyl glycine) is attached at glycine 2. Positions 16–25 (KRRRRGKQKK) are enriched in basic residues. In terms of domain architecture, Protein kinase spans 64 to 322 (YELGGELGRG…AEQVLEHPWL (259 aa)). Residues 70–78 (LGRGEFGIT) and lysine 93 contribute to the ATP site. Aspartate 188 functions as the Proton acceptor in the catalytic mechanism. The tract at residues 328-358 (MPDIPLGDAVRARLQQFAAMNKLKKKALKVI) is autoinhibitory domain. EF-hand domains are found at residues 365-400 (EEAA…LGNQ), 401-436 (MPDS…VRKI), 437-472 (GNDE…EIDG), and 473-508 (NDED…GTDW). Ca(2+) is bound by residues aspartate 378, serine 380, asparagine 382, glutamine 384, aspartate 389, aspartate 414, aspartate 416, asparagine 418, glutamate 425, aspartate 450, asparagine 452, serine 454, tyrosine 456, glutamate 461, aspartate 486, aspartate 488, aspartate 490, lysine 492, and glutamate 497.

It belongs to the protein kinase superfamily. Ser/Thr protein kinase family. CDPK subfamily.

The protein localises to the membrane. The enzyme catalyses L-seryl-[protein] + ATP = O-phospho-L-seryl-[protein] + ADP + H(+). It carries out the reaction L-threonyl-[protein] + ATP = O-phospho-L-threonyl-[protein] + ADP + H(+). Its activity is regulated as follows. Activated by calcium. Autophosphorylation may play an important role in the regulation of the kinase activity. May play a role in signal transduction pathways that involve calcium as a second messenger. The sequence is that of Calcium-dependent protein kinase 8 from Oryza sativa subsp. japonica (Rice).